Consider the following 122-residue polypeptide: Large ribosomal subunit protein uL14 (122 aa).

It belongs to the universal ribosomal protein uL14 family. Part of the 50S ribosomal subunit. Forms a cluster with proteins L3 and L19. In the 70S ribosome, L14 and L19 interact and together make contacts with the 16S rRNA in bridges B5 and B8.

Binds to 23S rRNA. Forms part of two intersubunit bridges in the 70S ribosome. This chain is Large ribosomal subunit protein uL14, found in Bacillus subtilis (strain 168).